A 566-amino-acid chain; its full sequence is Bifunctional NADP phosphatase/NAD kinase (566 aa).

The interval 1 to 283 is NADP phosphatase; that stretch reads MDMLEMALNI…KLVGIFGNRW (283 aa). The Mg(2+) site is built by glutamate 66, aspartate 85, valine 87, aspartate 88, and aspartate 229. Residues 275–566 are NAD kinase; it reads LVGIFGNRWR…YNKLKKLSLM (292 aa). Aspartate 355 (proton acceptor) is an active-site residue. NAD(+)-binding positions include 355–356, arginine 360, 430–431, lysine 441, arginine 458, aspartate 460, 471–476, and asparagine 528; these read DG, NE, and TAYSLS.

This sequence in the N-terminal section; belongs to the inositol monophosphatase superfamily. It in the C-terminal section; belongs to the NAD kinase family. In terms of assembly, homotetramer. It depends on Mg(2+) as a cofactor.

The protein localises to the cytoplasm. It catalyses the reaction NAD(+) + ATP = ADP + NADP(+) + H(+). It carries out the reaction NADP(+) + H2O = phosphate + NAD(+). In terms of biological role, involved in the regulation of the intracellular balance between NAD(H) and NADP(H), and is a key enzyme in the biosynthesis of NADP. Catalyzes the phosphorylation and dephosphorylation of NAD and NADP, respectively. Although it shows conflicting dual activities and is able to supply NADP, it seems that its physiological role is to prevent excess accumulation of NADP. This is Bifunctional NADP phosphatase/NAD kinase from Methanococcus maripaludis (strain DSM 14266 / JCM 13030 / NBRC 101832 / S2 / LL).